A 382-amino-acid polypeptide reads, in one-letter code: uncharacterized protein (382 aa).

11 consecutive transmembrane segments (helical) span residues 8–28, 45–65, 75–95, 102–122, 131–151, 157–177, 204–224, 231–251, 274–294, 325–345, and 349–369; these read VMLLLCGLLLLTLAIAVLNTL, MVSSSYFTGNLVGTLFTGYLI, YLASLIFAAGCVGLGGMVGFW, FIAGIGCAMIWVVVESALMCS, LLAAYMMAYYMGTFLGQLLVS, LLHVLPWVTGMILAGILPLLF, LGVNGCIISGIVLGSLYGLMP, GMANASIGFWMAVLVSAGILG, VVILGSIAMLTQAAMAPALFI, ALLLSYTVGSLLGPSFAAMLM, and SDNLLFIMIASVSFIYLLMLL.

It belongs to the major facilitator superfamily. YcaD (TC 2.A.1.26) family.

It is found in the cell inner membrane. This is an uncharacterized protein from Salmonella gallinarum (strain 287/91 / NCTC 13346).